A 195-amino-acid polypeptide reads, in one-letter code: Putative inactive carbonic anhydrase 5B-like protein (195 aa).

121–122 (TT) contributes to the substrate binding site.

The protein belongs to the alpha-carbonic anhydrase family.

In Homo sapiens (Human), this protein is Putative inactive carbonic anhydrase 5B-like protein (CA5BP1).